Reading from the N-terminus, the 110-residue chain is Nucleoid-associated protein bbp_426 (110 aa).

It belongs to the YbaB/EbfC family. In terms of assembly, homodimer.

It localises to the cytoplasm. The protein localises to the nucleoid. Binds to DNA and alters its conformation. May be involved in regulation of gene expression, nucleoid organization and DNA protection. The sequence is that of Nucleoid-associated protein bbp_426 from Buchnera aphidicola subsp. Baizongia pistaciae (strain Bp).